Reading from the N-terminus, the 727-residue chain is NADH-ubiquinone oxidoreductase 75 kDa subunit, mitochondrial (727 aa).

Residues 1 to 23 (MLRIPVKRALIGLSKSPKGYVRS) constitute a mitochondrion transit peptide. The 2Fe-2S ferredoxin-type domain maps to 30–108 (NLIEVFVDGQ…GWNILTNSEK (79 aa)). Residues C64, C75, and C78 each contribute to the [2Fe-2S] cluster site. The residue at position 84 (K84) is an N6-acetyllysine. Position 92 (C92) interacts with [2Fe-2S] cluster. Residues 108-147 (KSKKAREGVMEFLLANHPLDCPICDQGGECDLQDQSMMFG) enclose the 4Fe-4S His(Cys)3-ligated-type domain. The [4Fe-4S] cluster site is built by H124, C128, C131, C137, C176, C179, C182, and C226. A 4Fe-4S Mo/W bis-MGD-type domain is found at 245-301 (TRKTESIDVMDAVGSNIVVSTRTGEVMRILPRMHEDINEEWISDKTRFAYDGLKRQR). An N6-acetyllysine mark is found at K499 and K709.

It belongs to the complex I 75 kDa subunit family. As to quaternary structure, core subunit of respiratory chain NADH dehydrogenase (Complex I) which is composed of 45 different subunits. This is the largest subunit of complex I and it is a component of the iron-sulfur (IP) fragment of the enzyme. Complex I associates with ubiquinol-cytochrome reductase complex (Complex III) to form supercomplexes. Interacts with MDM2 and AKAP1. The cofactor is [2Fe-2S] cluster. [4Fe-4S] cluster serves as cofactor.

The protein localises to the mitochondrion inner membrane. The enzyme catalyses a ubiquinone + NADH + 5 H(+)(in) = a ubiquinol + NAD(+) + 4 H(+)(out). Functionally, core subunit of the mitochondrial membrane respiratory chain NADH dehydrogenase (Complex I) which catalyzes electron transfer from NADH through the respiratory chain, using ubiquinone as an electron acceptor. Essential for catalysing the entry and efficient transfer of electrons within complex I. Plays a key role in the assembly and stability of complex I and participates in the association of complex I with ubiquinol-cytochrome reductase complex (Complex III) to form supercomplexes. The polypeptide is NADH-ubiquinone oxidoreductase 75 kDa subunit, mitochondrial (Ndufs1) (Rattus norvegicus (Rat)).